The primary structure comprises 28 residues: Potassium channel toxin kappa-KTx 2.9 (28 aa).

Disulfide bonds link Cys4-Cys22 and Cys8-Cys18.

Belongs to the short scorpion toxin superfamily. Potassium channel inhibitor family. Gamma-KTx 2 subfamily. In terms of processing, contains 2 disulfide bonds. As to expression, expressed by the venom gland.

It is found in the secreted. Reversibly blocks voltage-gated potassium channels Kv1.2/KCNA2 and Kv1.3/KCNA3. The sequence is that of Potassium channel toxin kappa-KTx 2.9 from Pandinus imperator (Emperor scorpion).